The primary structure comprises 1391 residues: CAP-Gly domain-containing linker protein 1 (1391 aa).

Residues 1 to 53 form a disordered region; it reads MSMLKPSGLKAPTKILKPGSTALKTPAAAAAPVEKTIPSEKASGPPSSETQEE. The residue at position 48 (Ser48) is a Phosphoserine. Residue Thr50 is modified to Phosphothreonine. The 43-residue stretch at 78–120 folds into the CAP-Gly 1 domain; the sequence is GETQFAPGQWAGIVLDEPIGKNDGSVAGVRYFQCEPLKGIFTR. An important for tubulin binding region spans residues 97-101; the sequence is GKNDG. A disordered region spans residues 129–182; the sequence is QAEDEANGLQAAPGRTASPLSTAAATMVSSSPATPSNIPHKPSQSTAKEPSATP. Ser146 is modified (phosphoserine). Positions 146–182 are enriched in polar residues; the sequence is SPLSTAAATMVSSSPATPSNIPHKPSQSTAKEPSATP. Residue Thr181 is modified to Phosphothreonine. Phosphoserine is present on residues Ser194, Ser196, Ser199, and Ser203. In terms of domain architecture, CAP-Gly 2 spans 231-273; it reads GETDFAKGEWCGVELDEPLGKNDGAVAGTRYFQCQPKYGLFAP. Residues 302 to 331 show a composition bias toward low complexity; sequence TPASLKRSPSASSLSSMSSVASSVSSKPSR. The disordered stretch occupies residues 302–336; sequence TPASLKRSPSASSLSSMSSVASSVSSKPSRTGLLT. Residue Ser309 is modified to Phosphoserine. The residue at position 311 (Ser311) is a Phosphoserine; by PKA. Residues Ser314, Ser347, and Ser1189 each carry the phosphoserine modification. Positions 349 to 1306 form a coiled coil; sequence TTALQEALKE…VEMMSEAALN (958 aa). Residues 1251–1272 form a disordered region; the sequence is KRQLSSSSGNTDAQAEEDERAQ. Ser1317 carries the phosphoserine modification. The segment at 1370–1387 adopts a CCHC-type zinc-finger fold; it reads PYCEICEMFGHWATNCND.

In terms of assembly, interacts with MTOR; phosphorylates and regulates CLIP1. Interacts (via CAP-Gly domains) with tubulin. Interacts with SLAIN2. Interacts with TUBA1B, MAPRE1 and MAPRE3. Interacts (via zinc finger) with DCTN1. Binds preferentially to tyrosinated microtubules, and only marginally to detyrosinated microtubules. In terms of processing, phosphorylated. Phosphorylation induces conformational changes by increasing the affinity of the N-terminus for C-terminus, resulting in inhibition of its function thus decreasing its binding to microtubules and DCTN1. Exhibits a folded, autoinhibited conformation when phosphorylated and an open conformation when dephosphorylated with increased binding affinity to microtubules and DCTN1. Phosphorylation regulates its recruitment to tyrosinated microtubules and the recruitment of vesicular cargo to microtubules in neurons. Phosphorylation by MTOR may positively regulate CLIP1 association with microtubules. Expressed in the testes (at protein level).

It is found in the cytoplasm. The protein localises to the cytoskeleton. The protein resides in the cytoplasmic vesicle membrane. Its subcellular location is the cell projection. It localises to the ruffle. Binds to the plus end of microtubules and regulates the dynamics of the microtubule cytoskeleton. Promotes microtubule growth and microtubule bundling. Links cytoplasmic vesicles to microtubules and thereby plays an important role in intracellular vesicle trafficking. Plays a role macropinocytosis and endosome trafficking. The sequence is that of CAP-Gly domain-containing linker protein 1 (Clip1) from Mus musculus (Mouse).